Here is a 100-residue protein sequence, read N- to C-terminus: Class II hydrophobin CU (100 aa).

An N-terminal signal peptide occupies residues 1-25 (MQFSIATIALFLSSAMAAPYSGNSN). 4 disulfide bridges follow: Cys-32–Cys-82, Cys-42–Cys-72, Cys-43–Cys-55, and Cys-83–Cys-94.

The protein belongs to the cerato-ulmin hydrophobin family. In terms of assembly, homotetramer. Further self-assembles to form highly ordered films at water-air interfaces through intermolecular interactions.

It localises to the secreted. Its subcellular location is the cell wall. Aerial growth, conidiation, and dispersal of filamentous fungi in the environment rely upon a capability of their secreting small amphipathic proteins called hydrophobins (HPBs) with low sequence identity. Class I can self-assemble into an outermost layer of rodlet bundles on aerial cell surfaces, conferring cellular hydrophobicity that supports fungal growth, development and dispersal; whereas Class II form highly ordered films at water-air interfaces through intermolecular interactions but contribute nothing to the rodlet structure. CU is a class II hydrophobin that is implicated in the pathogenicity of this fungus on elm trees. Required for hydrophobicity and adherence of the cells and acts as a parasitic fitness factor by protecting infectious propagules from desiccation. Reduces the interfacial tension of both oil-water and air-water interfaces. This is Class II hydrophobin CU from Ophiostoma ulmi (Dutch elm disease fungus).